Consider the following 584-residue polypeptide: Potassium-transporting ATPase potassium-binding subunit (584 aa).

10 consecutive transmembrane segments (helical) span residues 8–28 (FLVL…EFMF), 65–85 (SFAV…FILQ), 139–159 (VQNF…IYGF), 172–192 (VLLL…ALVL), 262–282 (FTDL…CFMF), 292–312 (GIAI…LGIW), 398–418 (GLYC…LMVG), 440–460 (ILIP…ITAG), 507–527 (MFVG…AFVA), and 544–564 (LFII…FLPA).

It belongs to the KdpA family. In terms of assembly, the system is composed of three essential subunits: KdpA, KdpB and KdpC.

The protein resides in the cell membrane. Its function is as follows. Part of the high-affinity ATP-driven potassium transport (or Kdp) system, which catalyzes the hydrolysis of ATP coupled with the electrogenic transport of potassium into the cytoplasm. This subunit binds the extracellular potassium ions and delivers the ions to the membrane domain of KdpB through an intramembrane tunnel. The polypeptide is Potassium-transporting ATPase potassium-binding subunit (Methanoregula boonei (strain DSM 21154 / JCM 14090 / 6A8)).